A 123-amino-acid chain; its full sequence is Ribosome-binding factor A (123 aa).

The protein belongs to the RbfA family. Monomer. Binds 30S ribosomal subunits, but not 50S ribosomal subunits or 70S ribosomes.

The protein localises to the cytoplasm. In terms of biological role, one of several proteins that assist in the late maturation steps of the functional core of the 30S ribosomal subunit. Associates with free 30S ribosomal subunits (but not with 30S subunits that are part of 70S ribosomes or polysomes). Required for efficient processing of 16S rRNA. May interact with the 5'-terminal helix region of 16S rRNA. This is Ribosome-binding factor A from Dechloromonas aromatica (strain RCB).